The sequence spans 281 residues: Undecaprenyl-diphosphatase (281 aa).

The next 8 membrane-spanning stretches (helical) occupy residues 2–22 (FDLI…FLPV), 46–66 (AFSS…VIQL), 93–113 (VIVG…FMDA), 115–135 (LMNF…FIVI), 152–172 (ITFK…VPGT), 190–210 (FVAA…VTFL), 228–248 (IVML…IKFM), and 259–279 (VFGY…ILGI).

Belongs to the UppP family.

The protein localises to the cell membrane. The catalysed reaction is di-trans,octa-cis-undecaprenyl diphosphate + H2O = di-trans,octa-cis-undecaprenyl phosphate + phosphate + H(+). In terms of biological role, catalyzes the dephosphorylation of undecaprenyl diphosphate (UPP). Confers resistance to bacitracin. The protein is Undecaprenyl-diphosphatase of Leuconostoc mesenteroides subsp. mesenteroides (strain ATCC 8293 / DSM 20343 / BCRC 11652 / CCM 1803 / JCM 6124 / NCDO 523 / NBRC 100496 / NCIMB 8023 / NCTC 12954 / NRRL B-1118 / 37Y).